The following is an 856-amino-acid chain: DNA mismatch repair protein MutS (856 aa).

618 to 625 (GPNMGGKS) lines the ATP pocket.

It belongs to the DNA mismatch repair MutS family.

Its function is as follows. This protein is involved in the repair of mismatches in DNA. It is possible that it carries out the mismatch recognition step. This protein has a weak ATPase activity. The chain is DNA mismatch repair protein MutS from Shewanella baltica (strain OS223).